The sequence spans 335 residues: ATP-dependent 6-phosphofructokinase (335 aa).

Glycine 11 is an ATP binding site. An ADP-binding site is contributed by 21-25 (RAVVR). Residues 72–73 (RY) and 102–105 (GDGS) contribute to the ATP site. Aspartate 103 contributes to the Mg(2+) binding site. Position 125–127 (125–127 (TID)) interacts with substrate. Aspartate 127 serves as the catalytic Proton acceptor. Arginine 154 is a binding site for ADP. Residues arginine 162 and 169–171 (MGR) each bind substrate. Residues 185–187 (GAD) and 213–215 (KKH) contribute to the ADP site. Substrate is bound by residues glutamate 222, arginine 244, and 250-253 (HIQR).

It belongs to the phosphofructokinase type A (PFKA) family. ATP-dependent PFK group I subfamily. Prokaryotic clade 'B1' sub-subfamily. As to quaternary structure, homotetramer. Mg(2+) serves as cofactor.

Its subcellular location is the cytoplasm. The enzyme catalyses beta-D-fructose 6-phosphate + ATP = beta-D-fructose 1,6-bisphosphate + ADP + H(+). The protein operates within carbohydrate degradation; glycolysis; D-glyceraldehyde 3-phosphate and glycerone phosphate from D-glucose: step 3/4. Its activity is regulated as follows. Allosterically activated by ADP and other diphosphonucleosides, and allosterically inhibited by phosphoenolpyruvate. Catalyzes the phosphorylation of D-fructose 6-phosphate to fructose 1,6-bisphosphate by ATP, the first committing step of glycolysis. The chain is ATP-dependent 6-phosphofructokinase from Streptococcus pneumoniae (strain ATCC BAA-255 / R6).